Reading from the N-terminus, the 226-residue chain is MAGTGLVAGEVVVDALPYFDQGYEAPGVREAAAALVEEETRRYRPTKNYLSYLTAPDYSAFETDIMRNEFERLAARQPIELLSMKRYELPAPPSGQKKNDITAWQECVNNSMAQLEHQAVRIENLELMSQHGCNAWKVYNENLVHMIEHAQKELQKLRKHIQDLNWQRKNMQLTAGSKLREMESNWVSLVSKNYEIERTIVQLENEIYQIKQQHGEANKENIRQDF.

The residue at position 2 (Ala-2) is an N-acetylalanine. Ser-94 carries the phosphoserine modification. Positions 139–223 (YNENLVHMIE…HGEANKENIR (85 aa)) form a coiled coil.

It belongs to the SPF27 family. As to quaternary structure, component of the pre-catalytic and catalytic spliceosome complexes. Component of the postcatalytic spliceosome P complex. Component of the PRP19-CDC5L splicing complex composed of a core complex comprising a homotetramer of PRPF19, CDC5L, PLRG1 and BCAS2, and at least three less stably associated proteins CTNNBL1, CWC15 and HSPA8. Interacts directly in the complex with PRPF19, CDC5L and PLRG1.

The protein resides in the nucleus. It is found in the nucleolus. Required for pre-mRNA splicing as component of the activated spliceosome. Component of the PRP19-CDC5L complex that forms an integral part of the spliceosome and is required for activating pre-mRNA splicing. May have a scaffolding role in the spliceosome assembly as it contacts all other components of the core complex. The PRP19-CDC5L complex may also play a role in the response to DNA damage (DDR). This is Pre-mRNA-splicing factor SPF27 (BCAS2) from Pongo abelii (Sumatran orangutan).